The chain runs to 244 residues: 5-oxoprolinase subunit A (244 aa).

It belongs to the LamB/PxpA family. As to quaternary structure, forms a complex composed of PxpA, PxpB and PxpC.

The catalysed reaction is 5-oxo-L-proline + ATP + 2 H2O = L-glutamate + ADP + phosphate + H(+). In terms of biological role, catalyzes the cleavage of 5-oxoproline to form L-glutamate coupled to the hydrolysis of ATP to ADP and inorganic phosphate. The polypeptide is 5-oxoprolinase subunit A (Escherichia coli (strain SMS-3-5 / SECEC)).